Reading from the N-terminus, the 504-residue chain is Glucose-6-phosphate isomerase (504 aa).

Glutamate 333 serves as the catalytic Proton donor. Active-site residues include histidine 364 and lysine 473.

This sequence belongs to the GPI family.

It is found in the cytoplasm. The enzyme catalyses alpha-D-glucose 6-phosphate = beta-D-fructose 6-phosphate. The protein operates within carbohydrate biosynthesis; gluconeogenesis. It participates in carbohydrate degradation; glycolysis; D-glyceraldehyde 3-phosphate and glycerone phosphate from D-glucose: step 2/4. Its function is as follows. Catalyzes the reversible isomerization of glucose-6-phosphate to fructose-6-phosphate. This Xanthomonas campestris pv. campestris (strain B100) protein is Glucose-6-phosphate isomerase.